The chain runs to 634 residues: Ras and EF-hand domain-containing protein homolog (634 aa).

EF-hand domains are found at residues 5 to 33 (EVENLFSLCDSESKGYLTMEDLRKVCPQL) and 33 to 68 (LDDNDLRFIFTELDQDGSGKIEKLEFLRGFQDTVQH). Positions 46, 48, 50, 52, and 57 each coordinate Ca(2+). The stretch at 169–310 (LSEKKHENER…RCEFDQKQDE (142 aa)) forms a coiled coil. The tract at residues 212–234 (ARQEERDRLTKEKEEMRQRMSDE) is disordered. GTP is bound by residues 449–454 (AVGKSS), 552–555 (NKVD), and 585–586 (AL). A propeptide spans 632–634 (RGS) (removed in mature form).

This sequence belongs to the small GTPase superfamily. Rab family. Homodimer.

Its subcellular location is the cytoplasm. It is found in the perinuclear region. Binds GTP and GDP. Plays a role in uterine seam cell development. In Caenorhabditis elegans, this protein is Ras and EF-hand domain-containing protein homolog.